Here is a 146-residue protein sequence, read N- to C-terminus: Mediator of RNA polymerase II transcription subunit 10 (146 aa).

This sequence belongs to the Mediator complex subunit 10 family. Component of the Mediator complex.

It is found in the nucleus. Component of the Mediator complex, a coactivator involved in the regulated transcription of nearly all RNA polymerase II-dependent genes. Mediator functions as a bridge to convey information from gene-specific regulatory proteins to the basal RNA polymerase II transcription machinery. Mediator is recruited to promoters by direct interactions with regulatory proteins and serves as a scaffold for the assembly of a functional preinitiation complex with RNA polymerase II and the general transcription factors. The sequence is that of Mediator of RNA polymerase II transcription subunit 10 (NUT2) from Scheffersomyces stipitis (strain ATCC 58785 / CBS 6054 / NBRC 10063 / NRRL Y-11545) (Yeast).